Here is a 292-residue protein sequence, read N- to C-terminus: MRFVFIIALLLIGASLAHPADPIRAKRDVSASEDEFSGDSSGEISGESSGEASGEASGEASGEASGEASGESSGETSGESSGDEETSGEGSGEEGSGDTSPVVPVDELTLQQLETLNTYAQQVQAESQKLIHQANFVITEMTALSANAQNLGILSNIVLANSQMVLDSARLSLNETETETGTSAPATCVSSAVCYGDSGCGSGKCIGALAGTCNCNSCVFGWPCQEDSACGGFNGACNSITATCDCFAAYTKNNLTLAEALTSFCNVETCNGAEDNVEKCHGLPCNYGFCVC.

The signal sequence occupies residues 1-17 (MRFVFIIALLLIGASLA). Positions 28–103 (DVSASEDEFS…EGSGDTSPVV (76 aa)) are disordered. Low complexity predominate over residues 38-80 (GDSSGEISGESSGEASGEASGEASGEASGEASGESSGETSGES). Positions 81 to 96 (SGDEETSGEGSGEEGS) are enriched in acidic residues. Residues N174 and N254 are each glycosylated (N-linked (GlcNAc...) asparagine).

The polypeptide is Chondroitin proteoglycan 3 (Caenorhabditis elegans).